Here is a 38-residue protein sequence, read N- to C-terminus: Trypsin inhibitor DE5 beta chain (38 aa).

This sequence belongs to the protease inhibitor I3 (leguminous Kunitz-type inhibitor) family. Heterodimer of an alpha and a beta chain linked by a disulfide bond.

In terms of biological role, inhibition of trypsin. In Adenanthera pavonina (Sandal bead tree), this protein is Trypsin inhibitor DE5 beta chain.